A 215-amino-acid chain; its full sequence is Pyridoxine/pyridoxamine 5'-phosphate oxidase (215 aa).

Residues 9 to 12 and K67 contribute to the substrate site; that span reads RRDY. FMN contacts are provided by residues 62–67, 77–78, K84, and Q106; these read RVVLLK and FT. 3 residues coordinate substrate: Y124, R128, and S132. FMN contacts are provided by residues 141-142 and W186; that span reads QS. 192–194 provides a ligand contact to substrate; sequence RLH. Position 196 (R196) interacts with FMN.

It belongs to the pyridoxamine 5'-phosphate oxidase family. In terms of assembly, homodimer. It depends on FMN as a cofactor.

The enzyme catalyses pyridoxamine 5'-phosphate + O2 + H2O = pyridoxal 5'-phosphate + H2O2 + NH4(+). It carries out the reaction pyridoxine 5'-phosphate + O2 = pyridoxal 5'-phosphate + H2O2. It participates in cofactor metabolism; pyridoxal 5'-phosphate salvage; pyridoxal 5'-phosphate from pyridoxamine 5'-phosphate: step 1/1. Its pathway is cofactor metabolism; pyridoxal 5'-phosphate salvage; pyridoxal 5'-phosphate from pyridoxine 5'-phosphate: step 1/1. Functionally, catalyzes the oxidation of either pyridoxine 5'-phosphate (PNP) or pyridoxamine 5'-phosphate (PMP) into pyridoxal 5'-phosphate (PLP). In Chromohalobacter salexigens (strain ATCC BAA-138 / DSM 3043 / CIP 106854 / NCIMB 13768 / 1H11), this protein is Pyridoxine/pyridoxamine 5'-phosphate oxidase.